The primary structure comprises 289 residues: uncharacterized protein (289 aa).

The segment covering 80 to 96 (PLNESRTSFKNIPQSRN) has biased composition (polar residues). 2 disordered regions span residues 80–101 (PLNESRTSFKNIPQSRNLPRDY) and 136–157 (PRENFRNDTDIPKDPLRDRMRE).

This is an uncharacterized protein from Acanthamoeba polyphaga (Amoeba).